The sequence spans 439 residues: Acyl transferase 4 (439 aa).

Active-site proton acceptor residues include H166 and D382.

It belongs to the plant acyltransferase family.

Functionally, grass-specific monolignol p-coumaroyl transferase involved in the biosynthesis of acylated monolignols or monolignol conjugates that serve as monomer precursors of lignin. Can synthesize sinapyl p-coumarate, p-coumaryl p-coumarate, sinapyl caffeate and p-coumaryl caffeate in vitro. The protein is Acyl transferase 4 of Oryza sativa subsp. japonica (Rice).